The sequence spans 242 residues: E3 ubiquitin-protein ligase AIRP2 (242 aa).

An RING-type zinc finger spans residues 146-184 (CGICLEIRNKVVLPTCNHSMCINCYRNWRARSQSCPFCR).

Interacts with ATP1/SDIRIP1. In terms of tissue distribution, expressed in germinating seeds, flower organs and siliques.

It is found in the cytoplasm. Its subcellular location is the cytosol. It catalyses the reaction S-ubiquitinyl-[E2 ubiquitin-conjugating enzyme]-L-cysteine + [acceptor protein]-L-lysine = [E2 ubiquitin-conjugating enzyme]-L-cysteine + N(6)-ubiquitinyl-[acceptor protein]-L-lysine.. Functionally, possesses E3 ubiquitin-protein ligase activity in vitro when associated with the E2 enzyme UBC8 in vitro. Plays combinatory roles with AIRP1 in the positive regulation of the abscisic acid-mediated drought stress response. Plays a positive role in abscisic acid- and high salinity-regulated seed germination through the ubiquitin-proteasome-dependent down-regulation of ATP1/SDIRIP1. The chain is E3 ubiquitin-protein ligase AIRP2 from Arabidopsis thaliana (Mouse-ear cress).